Reading from the N-terminus, the 154-residue chain is Toxin YhaV (154 aa).

As to quaternary structure, homohexamer; forms a complex with PrlF (SohA) with stoichiometry PrlF(2)-YhaV(4), possibly as a YhaV(2)-PrlF(2)-YhaV(2) complex like the MazFE complex. May dimerize in solution.

Functionally, toxic component of a type II toxin-antitoxin (TA) system. Has RNase activity in vitro. Acts as a transcription factor. The YhaV/PrlF complex binds the prlF-yhaV operon, probably negatively regulating its expression. In Escherichia coli O157:H7, this protein is Toxin YhaV (yhaV).